The primary structure comprises 393 residues: ATP phosphoribosyltransferase regulatory subunit (393 aa).

This sequence belongs to the class-II aminoacyl-tRNA synthetase family. HisZ subfamily. In terms of assembly, heteromultimer composed of HisG and HisZ subunits.

The protein resides in the cytoplasm. Its pathway is amino-acid biosynthesis; L-histidine biosynthesis; L-histidine from 5-phospho-alpha-D-ribose 1-diphosphate: step 1/9. Required for the first step of histidine biosynthesis. May allow the feedback regulation of ATP phosphoribosyltransferase activity by histidine. The polypeptide is ATP phosphoribosyltransferase regulatory subunit (Shouchella clausii (strain KSM-K16) (Alkalihalobacillus clausii)).